Here is an 881-residue protein sequence, read N- to C-terminus: DNA mismatch repair protein MutS (881 aa).

An ATP-binding site is contributed by 632-639 (GPNMGGKS).

This sequence belongs to the DNA mismatch repair MutS family.

This protein is involved in the repair of mismatches in DNA. It is possible that it carries out the mismatch recognition step. This protein has a weak ATPase activity. The protein is DNA mismatch repair protein MutS of Chelativorans sp. (strain BNC1).